An 826-amino-acid chain; its full sequence is DNA mismatch repair protein MutS (826 aa).

622-629 (GPNMAGKS) contacts ATP.

Belongs to the DNA mismatch repair MutS family.

This protein is involved in the repair of mismatches in DNA. It is possible that it carries out the mismatch recognition step. This protein has a weak ATPase activity. This is DNA mismatch repair protein MutS from Chlamydia abortus (strain DSM 27085 / S26/3) (Chlamydophila abortus).